Reading from the N-terminus, the 204-residue chain is Urease accessory protein UreG (204 aa).

12 to 19 (GPVGSGKT) provides a ligand contact to GTP.

Belongs to the SIMIBI class G3E GTPase family. UreG subfamily. In terms of assembly, homodimer. UreD, UreF and UreG form a complex that acts as a GTP-hydrolysis-dependent molecular chaperone, activating the urease apoprotein by helping to assemble the nickel containing metallocenter of UreC. The UreE protein probably delivers the nickel.

The protein localises to the cytoplasm. In terms of biological role, facilitates the functional incorporation of the urease nickel metallocenter. This process requires GTP hydrolysis, probably effectuated by UreG. This chain is Urease accessory protein UreG, found in Hahella chejuensis (strain KCTC 2396).